Reading from the N-terminus, the 426-residue chain is MNAMSRISRRIFLALALSLAGLAQAQLSIEITGAGANRIPVTIVDFPGDPTAARVVTATVRADLERSGLFKLVDNGTAAFDENAPVNHAEWKGKGADALAAGSIARSTDGRMEARFRLYDTQKGVSLGGAAYVTNNSQLRAAGHRIADFIYEKLTGEKGVFSTRIAYVVKARGQFLLQIADSDGQNAATALSSTEPIISPVWSPDGGRLAYVSFEKKKPVIYVHTLASGQRHIVANFKGSNSAPAWSPDGRKLAVVLSKDGNSQIYSVNADGSGLQRITQSSGIDTEPRYSADGGTIYFTSDRGGSPQVYQVGASGGDAKRVTFEGSYNVSPRPAPDGKSLAFISRREGRFQLAVMDLASRQVQVVSDSNKDESPSFAPNSRMILIATEIGGRGVLSAVSSDGRIKQRLSVAAGDVREPAWGPYYQ.

A signal peptide spans Met-1–Ala-25.

The protein belongs to the TolB family. The Tol-Pal system is composed of five core proteins: the inner membrane proteins TolA, TolQ and TolR, the periplasmic protein TolB and the outer membrane protein Pal. They form a network linking the inner and outer membranes and the peptidoglycan layer.

It localises to the periplasm. Part of the Tol-Pal system, which plays a role in outer membrane invagination during cell division and is important for maintaining outer membrane integrity. In Dechloromonas aromatica (strain RCB), this protein is Tol-Pal system protein TolB.